A 389-amino-acid polypeptide reads, in one-letter code: Cytochrome b (389 aa).

A run of 4 helical transmembrane segments spans residues 32–52, 76–98, 113–133, and 179–199; these read FGSLLATVLGIQILSGIFLAM, WLIRYMHATGASFFFAFLYLHIA, TWTIGTAIFFLTILTAFLGYT, and FFSLHYLLPFIISALAIMHMI. Positions 82 and 96 each coordinate heme b. Positions 183 and 197 each coordinate heme b. Histidine 202 provides a ligand contact to a ubiquinone. 4 helical membrane-spanning segments follow: residues 225 to 245, 289 to 309, 321 to 341, and 348 to 368; these read YLIKDLVTIFLFFIIFSIIIF, LFGVIAMFFAIFILFFLPLLD, IGKLLFWCFISNFILLMFIGA, and YVAIGTYATLFYFAYFVFFIP.

The protein belongs to the cytochrome b family. In terms of assembly, fungal cytochrome b-c1 complex contains 10 subunits; 3 respiratory subunits, 2 core proteins and 5 low-molecular weight proteins. Cytochrome b-c1 complex is a homodimer. Requires heme b as cofactor.

The protein resides in the mitochondrion inner membrane. Its function is as follows. Component of the ubiquinol-cytochrome c reductase complex (complex III or cytochrome b-c1 complex) that is part of the mitochondrial respiratory chain. The b-c1 complex mediates electron transfer from ubiquinol to cytochrome c. Contributes to the generation of a proton gradient across the mitochondrial membrane that is then used for ATP synthesis. This chain is Cytochrome b (cob), found in Schizosaccharomyces japonicus (Fission yeast).